The chain runs to 819 residues: Meiotically up-regulated gene 45 protein (819 aa).

The helical transmembrane segment at 797-817 threads the bilayer; that stretch reads AMCLLTLLIGIYLILQVVFIY.

The protein localises to the membrane. Its function is as follows. Has a role in meiosis. The polypeptide is Meiotically up-regulated gene 45 protein (mug45) (Schizosaccharomyces pombe (strain 972 / ATCC 24843) (Fission yeast)).